Consider the following 523-residue polypeptide: Ribonuclease Y (523 aa).

Residues 7-24 form a helical membrane-spanning segment; it reads LSSLASALLAGGGTYLVY. The region spanning 213 to 279 is the KH domain; that stretch reads LINVVNLPND…TRTIEALVED (67 aa). The 94-residue stretch at 339–432 folds into the HD domain; that stretch reads ALGHSLEVAN…VCAADALSAA (94 aa).

This sequence belongs to the RNase Y family.

It is found in the cell membrane. Functionally, endoribonuclease that initiates mRNA decay. This chain is Ribonuclease Y, found in Wolinella succinogenes (strain ATCC 29543 / DSM 1740 / CCUG 13145 / JCM 31913 / LMG 7466 / NCTC 11488 / FDC 602W) (Vibrio succinogenes).